A 175-amino-acid polypeptide reads, in one-letter code: NADH-ubiquinone oxidoreductase chain 6 (175 aa).

5 helical membrane passes run 1–21 (MMMYIVFILSIIFVISFVGVS), 25–45 (SPIYGGLGLIVGGGVGCGVIL), 47–67 (FGGSFLGLMVFLIYLGGMLVV), 88–108 (VVLGAFVLGLVVEFLIVIYAL), and 149–169 (YGVWLVIVTGWSLFISVVIIM).

Belongs to the complex I subunit 6 family. Core subunit of respiratory chain NADH dehydrogenase (Complex I) which is composed of 45 different subunits.

Its subcellular location is the mitochondrion inner membrane. The catalysed reaction is a ubiquinone + NADH + 5 H(+)(in) = a ubiquinol + NAD(+) + 4 H(+)(out). Core subunit of the mitochondrial membrane respiratory chain NADH dehydrogenase (Complex I) which catalyzes electron transfer from NADH through the respiratory chain, using ubiquinone as an electron acceptor. Essential for the catalytic activity and assembly of complex I. The chain is NADH-ubiquinone oxidoreductase chain 6 (MT-ND6) from Balaenoptera physalus (Fin whale).